Consider the following 248-residue polypeptide: DNA repair protein RecO (248 aa).

Belongs to the RecO family.

Its function is as follows. Involved in DNA repair and RecF pathway recombination. The protein is DNA repair protein RecO of Rubrobacter xylanophilus (strain DSM 9941 / JCM 11954 / NBRC 16129 / PRD-1).